Consider the following 287-residue polypeptide: Homoserine kinase (287 aa).

An ATP-binding site is contributed by P78–T88.

The protein belongs to the GHMP kinase family. Homoserine kinase subfamily.

It localises to the cytoplasm. It carries out the reaction L-homoserine + ATP = O-phospho-L-homoserine + ADP + H(+). The protein operates within amino-acid biosynthesis; L-threonine biosynthesis; L-threonine from L-aspartate: step 4/5. Functionally, catalyzes the ATP-dependent phosphorylation of L-homoserine to L-homoserine phosphate. The chain is Homoserine kinase from Lactobacillus gasseri (strain ATCC 33323 / DSM 20243 / BCRC 14619 / CIP 102991 / JCM 1131 / KCTC 3163 / NCIMB 11718 / NCTC 13722 / AM63).